The sequence spans 201 residues: Recombination protein RecR (201 aa).

The C4-type zinc-finger motif lies at 57 to 72 (CRDCRTFTEQEVCTIC). Residues 81 to 176 (GQICVVESPA…LASRIAHGVP (96 aa)) form the Toprim domain.

This sequence belongs to the RecR family.

May play a role in DNA repair. It seems to be involved in an RecBC-independent recombinational process of DNA repair. It may act with RecF and RecO. The chain is Recombination protein RecR from Edwardsiella ictaluri (strain 93-146).